A 100-amino-acid chain; its full sequence is Urease subunit gamma (100 aa).

Belongs to the urease gamma subunit family. In terms of assembly, heterotrimer of UreA (gamma), UreB (beta) and UreC (alpha) subunits. Three heterotrimers associate to form the active enzyme.

It localises to the cytoplasm. It carries out the reaction urea + 2 H2O + H(+) = hydrogencarbonate + 2 NH4(+). Its pathway is nitrogen metabolism; urea degradation; CO(2) and NH(3) from urea (urease route): step 1/1. In Ralstonia nicotianae (strain ATCC BAA-1114 / GMI1000) (Ralstonia solanacearum), this protein is Urease subunit gamma.